A 99-amino-acid chain; its full sequence is Small ribosomal subunit protein eS24 (99 aa).

The protein belongs to the eukaryotic ribosomal protein eS24 family.

The polypeptide is Small ribosomal subunit protein eS24 (rps2e) (Thermoplasma volcanium (strain ATCC 51530 / DSM 4299 / JCM 9571 / NBRC 15438 / GSS1)).